The chain runs to 205 residues: Urease accessory protein UreG 1 (205 aa).

14 to 21 (GPVGSGKT) is a GTP binding site.

It belongs to the SIMIBI class G3E GTPase family. UreG subfamily. In terms of assembly, homodimer. UreD, UreF and UreG form a complex that acts as a GTP-hydrolysis-dependent molecular chaperone, activating the urease apoprotein by helping to assemble the nickel containing metallocenter of UreC. The UreE protein probably delivers the nickel.

The protein localises to the cytoplasm. Its function is as follows. Facilitates the functional incorporation of the urease nickel metallocenter. This process requires GTP hydrolysis, probably effectuated by UreG. In Methylobacterium radiotolerans (strain ATCC 27329 / DSM 1819 / JCM 2831 / NBRC 15690 / NCIMB 10815 / 0-1), this protein is Urease accessory protein UreG 1.